The chain runs to 589 residues: Progranulin (589 aa).

The N-terminal stretch at Met-1–Gly-17 is a signal peptide. N-linked (GlcNAc...) asparagine glycosylation is present at Asn-38. Intrachain disulfides connect Cys-125-Cys-138 and Cys-132-Cys-148. Residue Asn-263 is glycosylated (N-linked (GlcNAc...) asparagine). 10 disulfides stabilise this stretch: Cys-282–Cys-294, Cys-288–Cys-304, Cys-295–Cys-312, Cys-305–Cys-319, Cys-313–Cys-326, Cys-320–Cys-333, Cys-364–Cys-376, Cys-370–Cys-386, Cys-395–Cys-408, and Cys-402–Cys-414. Asn-373 is a glycosylation site (N-linked (GlcNAc...) asparagine). Asn-526 carries an N-linked (GlcNAc...) asparagine glycan.

Belongs to the granulin family. Progranulin is secreted as a homodimer. Interacts with SLPI; interaction protects progranulin from proteolysis. Interacts (via region corresponding to granulin-7 peptide) with CTSD; stabilizes CTSD and increases its proteolytic activity. Interacts (via region corresponding to granulin-7 peptide) with SORT1; this interaction mediates endocytosis and lysosome delivery of progranulin; interaction occurs at the neuronal cell surface in a stressed nervous system. Interacts with PSAP; facilitates lysosomal delivery of progranulin from the extracellular space and the biosynthetic pathway. Forms a complex with PSAP and M6PR; PSAP bridges the binding between progranulin and M6PR. Forms a complex with PSAP and SORT1; progranulin bridges the interaction between PSAP and SORT1; facilitates lysosomal targeting of PSAP via SORT1; interaction enhances PSAP uptake in primary cortical neurons. Interacts (via regions corresponding to granulin-2 and granulin-7 peptides) with GBA1; this interaction prevents aggregation of GBA1-SCARB2 complex via interaction with HSPA1A upon stress. Interacts (via region corresponding to granulin-7 peptide) with HSPA1A; mediates recruitment of HSPA1A to GBA1 and prevents GBA1 aggregation in response to stress. N-glycosylated. In terms of processing, cleaved by ELANE; proteolysis is blocked by SLPI and is concentration- and time-dependent and induces CXCL8/IL-8 production; granulin-3 and granulin-4 are resistant to ELANE. Cleaved by CTSL in lysosome thus regulating the maturation and turnover of progranulin within the lysosome. As to expression, highly expressed at the wound site and diminishes away from the wound. Not expressed in fibroblasts and endothelial cells in intact skin. In adult brain, expressed primarily in neurons and in resting and reactive microglia. Expressed in both neurons and microglia. Highly expressed in activated microglia in response to injury. Expressed in macrophage.

It is found in the secreted. The protein localises to the lysosome. In terms of biological role, secreted protein that acts as a key regulator of lysosomal function and as a growth factor involved in inflammation, wound healing and cell proliferation. Regulates protein trafficking to lysosomes, and also the activity of lysosomal enzymes. Also facilitates the acidification of lysosomes, causing degradation of mature CTSD by CTSB. In addition, functions as a wound-related growth factor that acts directly on dermal fibroblasts and endothelial cells to promote division, migration and the formation of capillary-like tubule structures. Also promotes epithelial cell proliferation by blocking TNF-mediated neutrophil activation preventing release of oxidants and proteases. Moreover, modulates inflammation in neurons by preserving neurons survival, axonal outgrowth and neuronal integrity. Inhibits epithelial cell proliferation and induces epithelial cells to secrete IL-8. Its function is as follows. Stabilizes CTSD through interaction with CTSD leading to maintain its aspartic-type peptidase activity. This chain is Progranulin (Grn), found in Mus musculus (Mouse).